The following is a 153-amino-acid chain: Large ribosomal subunit protein uL30 (153 aa).

It belongs to the universal ribosomal protein uL30 family. As to quaternary structure, part of the 50S ribosomal subunit.

This chain is Large ribosomal subunit protein uL30, found in Metallosphaera sedula (strain ATCC 51363 / DSM 5348 / JCM 9185 / NBRC 15509 / TH2).